Consider the following 180-residue polypeptide: Large ribosomal subunit protein uL5 (180 aa).

This sequence belongs to the universal ribosomal protein uL5 family. Part of the 50S ribosomal subunit; part of the 5S rRNA/L5/L18/L25 subcomplex. Contacts the 5S rRNA and the P site tRNA. Forms a bridge to the 30S subunit in the 70S ribosome.

This is one of the proteins that bind and probably mediate the attachment of the 5S RNA into the large ribosomal subunit, where it forms part of the central protuberance. In the 70S ribosome it contacts protein S13 of the 30S subunit (bridge B1b), connecting the 2 subunits; this bridge is implicated in subunit movement. Contacts the P site tRNA; the 5S rRNA and some of its associated proteins might help stabilize positioning of ribosome-bound tRNAs. The polypeptide is Large ribosomal subunit protein uL5 (Mycoplasma capricolum subsp. capricolum (strain California kid / ATCC 27343 / NCTC 10154)).